The primary structure comprises 131 residues: uncharacterized protein (131 aa).

2 helical membrane-spanning segments follow: residues 61–81 (LLLLPTIYIRSLVSYNVYLPI) and 102–122 (VCSIASLFILVLFLFCFALRY).

It localises to the membrane. This is an uncharacterized protein from Saccharomyces cerevisiae (strain ATCC 204508 / S288c) (Baker's yeast).